The following is a 307-amino-acid chain: MPSEHPFSDGISTPNPKETMNDTAQITAGYGRRYIVRTPDGTTYEASTRKKRVDFACGDRVRISPVNAEQVVIEDFLPRQSLLYRQDAWKTKLIAANVTQLLIVTAAVPSPSVRLLQRALLAAEAAGIRAVIVLNKADLPETALWLEKLKFYETLGYPVIETRVLENADSLRPVLQGHSNILLGQSGMGKSTLANALLGSQTARTGDISAALDSGKHTTTHARLYDLNGETQLIDSPGLQEFGLHHLQAADLPHYFPDFRHLVGQCRFHNCTHRAEPGCAFKAAAETGAASPERLAFLQGITDELLG.

The segment at 1–21 (MPSEHPFSDGISTPNPKETMN) is disordered. Residues 10 to 21 (GISTPNPKETMN) are compositionally biased toward polar residues. Residues 85–242 (RQDAWKTKLI…LIDSPGLQEF (158 aa)) enclose the CP-type G domain. GTP is bound by residues 135–138 (NKAD) and 184–192 (GQSGMGKST). Residues Cys266, Cys271, His273, and Cys279 each coordinate Zn(2+).

This sequence belongs to the TRAFAC class YlqF/YawG GTPase family. RsgA subfamily. In terms of assembly, monomer. Associates with 30S ribosomal subunit, binds 16S rRNA. The cofactor is Zn(2+).

The protein resides in the cytoplasm. Functionally, one of several proteins that assist in the late maturation steps of the functional core of the 30S ribosomal subunit. Helps release RbfA from mature subunits. May play a role in the assembly of ribosomal proteins into the subunit. Circularly permuted GTPase that catalyzes slow GTP hydrolysis, GTPase activity is stimulated by the 30S ribosomal subunit. The chain is Small ribosomal subunit biogenesis GTPase RsgA from Neisseria gonorrhoeae (strain ATCC 700825 / FA 1090).